The following is a 474-amino-acid chain: MLKVTVPSCPSSPCSSVTSSTENLVPDYWIDGSKRDPLSDFFEVESELGRGATSIVYRCKQKGTQKPYALKVLKKTVDKKIVRTEIGVLLRLSHPNIIKLKEIFETPTEISLVLELVTGGELFDRIVEKGYYSERDAADAVKQILEAVAYLHENGIVHRDLKPENLLYATPAPDAPLKIADFGLSKIVEHQVLMKTVCGTPGYCAPEILRGCAYGPEVDMWSVGIITYILLCGFEPFYDERGDQFMFRRILNCEYYFISPWWDEVSLNAKDLVKKLIVLDPKKRLTTFQALQHPWVTGKAANFVHMDTAQKKLQEFNARRKLKAAVKAVVASSRLGSASSSHTNIQESNKASSEAQPAQDGKDKTDPLENKMQAGDHEAAKAAADETMKLQSEEVEEEEGVKEEEEEEEEEEETSRMVPQEPEDRLETDDQEMKRNSEETLKSVEEEMDPKAEEEAAAVGLGVPPQQDAILPEY.

2 positions are modified to phosphoserine; by autocatalysis: S11 and S12. The Protein kinase domain maps to 42-296; the sequence is FEVESELGRG…TFQALQHPWV (255 aa). Residues 48 to 56 and K71 contribute to the ATP site; that span reads LGRGATSIV. Residue T53 is glycosylated (O-linked (GlcNAc) threonine). A glycan (O-linked (GlcNAc) serine) is linked at S54. S133 carries an O-linked (GlcNAc) serine glycan. The Proton acceptor role is filled by D160. A glycan (O-linked (GlcNAc) serine) is linked at S185. Position 196 is a phosphothreonine; by CaMKK1 and CaMKK2 (T196). The tract at residues 297-336 is autoinhibitory domain; that stretch reads TGKAANFVHMDTAQKKLQEFNARRKLKAAVKAVVASSRLG. The segment at 302 to 319 is PP2A-binding; that stretch reads NFVHMDTAQKKLQEFNAR. A calmodulin-binding region spans residues 318–337; that stretch reads ARRKLKAAVKAVVASSRLGS. S332 is subject to Phosphoserine; by autocatalysis. Residues 336–474 form a disordered region; sequence GSASSSHTNI…PQQDAILPEY (139 aa). S337 is modified (phosphoserine). 3 O-linked (GlcNAc) serine glycosylation sites follow: S340, S341, and S352. Residues 342-356 are compositionally biased toward polar residues; sequence HTNIQESNKASSEAQ. A compositionally biased stretch (basic and acidic residues) spans 360-392; that stretch reads DGKDKTDPLENKMQAGDHEAAKAAADETMKLQS. Positions 393 to 413 are enriched in acidic residues; the sequence is EEVEEEEGVKEEEEEEEEEEE. Over residues 431–454 the composition is skewed to basic and acidic residues; the sequence is QEMKRNSEETLKSVEEEMDPKAEE. Phosphoserine is present on residues S437 and S443.

It belongs to the protein kinase superfamily. CAMK Ser/Thr protein kinase family. CaMK subfamily. Monomer. Interacts with protein phosphatase 2A (PPP2CA/PPP2CB); the interaction is mutually exclusive with binding to Ca(2+)/calmodulin. Phosphorylated by CaMKK1 and CaMKK2 on Thr-196. Dephosphorylated by protein phosphatase 2A. Autophosphorylated on Ser-11 and Ser-12. Post-translationally, glycosylation at Ser-185 modulates the phosphorylation of CaMK4 at Thr-196 and negatively regulates its activity toward CREB1 in basal conditions and during early inomycin stimulation. In terms of processing, the N-terminus of calspermin is blocked. In terms of tissue distribution, isoform 1 is expressed in brain and isoform 2 is testis specific.

It is found in the cytoplasm. The protein localises to the nucleus. It carries out the reaction L-seryl-[protein] + ATP = O-phospho-L-seryl-[protein] + ADP + H(+). The catalysed reaction is L-threonyl-[protein] + ATP = O-phospho-L-threonyl-[protein] + ADP + H(+). With respect to regulation, activated by Ca(2+)/calmodulin. Binding of calmodulin results in conformational change that relieves intrasteric autoinhibition and allows phosphorylation of Thr-196 within the activation loop by CaMKK1 or CaMKK2. Phosphorylation of Thr-196 results in a 10-20-fold increase in total activity to generate Ca(2+)/calmodulin-independent activity. Autophosphorylation of the N-terminus Ser-11 and Ser-12 is required for full activation. Inactivated by protein phosphatase 2A (PPP2CA/PPP2CB) which dephosphorylates Thr-196, thereby terminating autonomous activity and helping to maintain the enzyme in its autoinhibited state. In terms of biological role, calcium/calmodulin-dependent protein kinase that operates in the calcium-triggered CaMKK-CaMK4 signaling cascade and regulates, mainly by phosphorylation, the activity of several transcription activators, such as CREB1, MEF2D, JUN and RORA, which play pivotal roles in immune response, inflammation, and memory consolidation. In the thymus, regulates the CD4(+)/CD8(+) double positive thymocytes selection threshold during T-cell ontogeny. In CD4 memory T-cells, is required to link T-cell antigen receptor (TCR) signaling to the production of IL2, IFNG and IL4 (through the regulation of CREB and MEF2). Regulates the differentiation and survival phases of osteoclasts and dendritic cells (DCs). Mediates DCs survival by linking TLR4 and the regulation of temporal expression of BCL2. Phosphorylates the transcription activator CREB1 on 'Ser-133' in hippocampal neuron nuclei and contribute to memory consolidation and long term potentiation (LTP) in the hippocampus. Can activate the MAP kinases MAPK1/ERK2, MAPK8/JNK1 and MAPK14/p38 and stimulate transcription through the phosphorylation of ELK1 and ATF2. Can also phosphorylate in vitro CREBBP, PRM2, MEF2A and STMN1/OP18. Heat-stable, acidic, calmodulin-binding protein. In Rattus norvegicus (Rat), this protein is Calcium/calmodulin-dependent protein kinase type IV (Camk4).